Reading from the N-terminus, the 156-residue chain is Crossover junction endodeoxyribonuclease RuvC (156 aa).

Active-site residues include Asp7, Glu67, and Asp140. Mg(2+) contacts are provided by Asp7, Glu67, and Asp140.

It belongs to the RuvC family. Homodimer which binds Holliday junction (HJ) DNA. The HJ becomes 2-fold symmetrical on binding to RuvC with unstacked arms; it has a different conformation from HJ DNA in complex with RuvA. In the full resolvosome a probable DNA-RuvA(4)-RuvB(12)-RuvC(2) complex forms which resolves the HJ. Mg(2+) is required as a cofactor.

It is found in the cytoplasm. It catalyses the reaction Endonucleolytic cleavage at a junction such as a reciprocal single-stranded crossover between two homologous DNA duplexes (Holliday junction).. In terms of biological role, the RuvA-RuvB-RuvC complex processes Holliday junction (HJ) DNA during genetic recombination and DNA repair. Endonuclease that resolves HJ intermediates. Cleaves cruciform DNA by making single-stranded nicks across the HJ at symmetrical positions within the homologous arms, yielding a 5'-phosphate and a 3'-hydroxyl group; requires a central core of homology in the junction. The consensus cleavage sequence is 5'-(A/T)TT(C/G)-3'. Cleavage occurs on the 3'-side of the TT dinucleotide at the point of strand exchange. HJ branch migration catalyzed by RuvA-RuvB allows RuvC to scan DNA until it finds its consensus sequence, where it cleaves and resolves the cruciform DNA. This Rickettsia felis (strain ATCC VR-1525 / URRWXCal2) (Rickettsia azadi) protein is Crossover junction endodeoxyribonuclease RuvC.